Reading from the N-terminus, the 525-residue chain is Alpha-ketoglutaric semialdehyde dehydrogenase 2 (525 aa).

Residues Lys-185, Glu-188, and 242 to 247 contribute to the NAD(+) site; that span reads GSRQGG. The Proton acceptor role is filled by Glu-266. Cys-303 (nucleophile) is an active-site residue. Glu-394 contacts NAD(+).

Belongs to the aldehyde dehydrogenase family. In terms of assembly, homodimer.

It catalyses the reaction 2,5-dioxopentanoate + NADP(+) + H2O = 2-oxoglutarate + NADPH + 2 H(+). It carries out the reaction 2,5-dioxopentanoate + NAD(+) + H2O = 2-oxoglutarate + NADH + 2 H(+). It functions in the pathway carbohydrate acid metabolism; D-glucarate degradation. Its pathway is carbohydrate acid metabolism; galactarate degradation. Functionally, catalyzes the NAD(P)(+)-dependent oxidation of alpha-ketoglutaric semialdehyde (alphaKGSA) to alpha-ketoglutarate. Involved in D-glucarate/D-galactarate metabolism. Prefers NAD(+) to NADP(+) as a cosubstrate. In Azospirillum brasilense, this protein is Alpha-ketoglutaric semialdehyde dehydrogenase 2.